The primary structure comprises 99 residues: Large ribosomal subunit protein uL23 (99 aa).

The protein belongs to the universal ribosomal protein uL23 family. Part of the 50S ribosomal subunit. Contacts protein L29, and trigger factor when it is bound to the ribosome.

One of the early assembly proteins it binds 23S rRNA. One of the proteins that surrounds the polypeptide exit tunnel on the outside of the ribosome. Forms the main docking site for trigger factor binding to the ribosome. The sequence is that of Large ribosomal subunit protein uL23 from Rhodopseudomonas palustris (strain BisB18).